A 262-amino-acid polypeptide reads, in one-letter code: 2-keto-4-pentenoate hydratase (262 aa).

The protein belongs to the hydratase/decarboxylase family. MhpD subfamily. The cofactor is a divalent metal cation.

The enzyme catalyses (S)-4-hydroxy-2-oxopentanoate = (2Z)-2-hydroxypenta-2,4-dienoate + H2O. The protein operates within aromatic compound metabolism; 3-phenylpropanoate degradation. Functionally, catalyzes the conversion of 2-hydroxypentadienoic acid (enolic form of 2-oxopent-4-enoate) to 4-hydroxy-2-ketopentanoic acid. In Paraburkholderia phymatum (strain DSM 17167 / CIP 108236 / LMG 21445 / STM815) (Burkholderia phymatum), this protein is 2-keto-4-pentenoate hydratase.